A 347-amino-acid chain; its full sequence is Serpentine receptor class beta-2 (347 aa).

A run of 7 helical transmembrane segments spans residues 27-47 (IAQL…YIFL), 62-82 (FLLV…AFLF), 108-128 (GNLS…GFSI), 146-166 (FLGP…LYHV), 194-214 (FWEL…FLLV), 246-266 (LIVS…TIFV), and 288-308 (ITVP…LSFM).

The protein belongs to the nematode receptor-like protein srb family.

It localises to the membrane. In Caenorhabditis elegans, this protein is Serpentine receptor class beta-2 (srb-2).